Reading from the N-terminus, the 771-residue chain is Probable exo-1,4-beta-xylosidase xlnD (771 aa).

Residues 1 to 25 form the signal peptide; the sequence is MARIMSWHYGKAITLFVCLGPVALS. Residue N67 is glycosylated (N-linked (GlcNAc...) asparagine). The active site involves D293. N305, N345, N423, and N464 each carry an N-linked (GlcNAc...) asparagine glycan.

Belongs to the glycosyl hydrolase 3 family.

The protein resides in the secreted. It catalyses the reaction Hydrolysis of (1-&gt;4)-beta-D-xylans, to remove successive D-xylose residues from the non-reducing termini.. It participates in glycan degradation; xylan degradation. Xylan 1,4-beta-xylosidase involved in the hydrolysis of xylan, a major structural heterogeneous polysaccharide found in plant biomass representing the second most abundant polysaccharide in the biosphere, after cellulose. In Neosartorya fischeri (strain ATCC 1020 / DSM 3700 / CBS 544.65 / FGSC A1164 / JCM 1740 / NRRL 181 / WB 181) (Aspergillus fischerianus), this protein is Probable exo-1,4-beta-xylosidase xlnD (xlnD).